The sequence spans 157 residues: Transcriptional repressor NrdR (157 aa).

The segment at 3 to 34 (CPSCQNTDSRVLESRSADAGKCVRRRRECLNC) is a zinc-finger region. Residues 49-139 (VTVIKRSNAK…VYRQFNGIED (91 aa)) enclose the ATP-cone domain.

The protein belongs to the NrdR family. Requires Zn(2+) as cofactor.

Its function is as follows. Negatively regulates transcription of bacterial ribonucleotide reductase nrd genes and operons by binding to NrdR-boxes. The protein is Transcriptional repressor NrdR of Prochlorococcus marinus (strain SARG / CCMP1375 / SS120).